The primary structure comprises 485 residues: Glutamyl-tRNA(Gln) amidotransferase subunit A (485 aa).

Catalysis depends on charge relay system residues K78 and S153. S177 (acyl-ester intermediate) is an active-site residue.

Belongs to the amidase family. GatA subfamily. Heterotrimer of A, B and C subunits.

The enzyme catalyses L-glutamyl-tRNA(Gln) + L-glutamine + ATP + H2O = L-glutaminyl-tRNA(Gln) + L-glutamate + ADP + phosphate + H(+). Functionally, allows the formation of correctly charged Gln-tRNA(Gln) through the transamidation of misacylated Glu-tRNA(Gln) in organisms which lack glutaminyl-tRNA synthetase. The reaction takes place in the presence of glutamine and ATP through an activated gamma-phospho-Glu-tRNA(Gln). This Bacillus cereus (strain AH820) protein is Glutamyl-tRNA(Gln) amidotransferase subunit A.